The sequence spans 245 residues: tRNA1(Val) (adenine(37)-N6)-methyltransferase (245 aa).

The protein belongs to the methyltransferase superfamily. tRNA (adenine-N(6)-)-methyltransferase family.

The protein localises to the cytoplasm. It carries out the reaction adenosine(37) in tRNA1(Val) + S-adenosyl-L-methionine = N(6)-methyladenosine(37) in tRNA1(Val) + S-adenosyl-L-homocysteine + H(+). In terms of biological role, specifically methylates the adenine in position 37 of tRNA(1)(Val) (anticodon cmo5UAC). The chain is tRNA1(Val) (adenine(37)-N6)-methyltransferase from Escherichia fergusonii (strain ATCC 35469 / DSM 13698 / CCUG 18766 / IAM 14443 / JCM 21226 / LMG 7866 / NBRC 102419 / NCTC 12128 / CDC 0568-73).